A 240-amino-acid polypeptide reads, in one-letter code: MDQTNETKILVVDDEARIRRLLRMYLERENYAIDEAENGDEAIAKGLEANYDLILLDLMMPGTDGIEVCRQIREKKATPIIMLTAKGEEANRVQGFEAGTDDYIVKPFSPREVVLRVKALLRRASQTSYFNANTPTKNVLVFSHLSIDHDAHRVTADGTEVSLTPKEYELLYFLAKTPDKVYDREKLLKEVWQYEFFGDLRTVDTHVKRLREKLNKVSPEAAKKIVTVWGVGYKFEVGAE.

The 114-residue stretch at 8–121 folds into the Response regulatory domain; it reads KILVVDDEAR…EVVLRVKALL (114 aa). Asp-57 is subject to 4-aspartylphosphate. A DNA-binding region (ompR/PhoB-type) is located at residues 137–237; sequence KNVLVFSHLS…VWGVGYKFEV (101 aa).

Interacts with the RNA polymerase core. Phosphorylated by ResE.

The protein resides in the cytoplasm. Its function is as follows. Member of the two-component regulatory system ResD/ResE. Required for the expression of resA, ctaA, qcrABC and fnr; activation role in global regulation of aerobic and anaerobic respiration. This Bacillus subtilis (strain 168) protein is Transcriptional regulatory protein ResD (resD).